Reading from the N-terminus, the 1862-residue chain is Transient receptor potential cation channel subfamily M member 7 (1862 aa).

Met-1 bears the N-acetylmethionine mark. At 1-850 (MSQKSWIEST…ITRKFYAFYH (850 aa)) the chain is on the cytoplasmic side. Ser-101 is modified (phosphoserine). Low complexity predominate over residues 544 to 554 (NRRSGRNASSS). The interval 544–574 (NRRSGRNASSSTPQLRKSHETFGNRADKKEK) is disordered. Residues 560 to 573 (KSHETFGNRADKKE) show a composition bias toward basic and acidic residues. A helical transmembrane segment spans residues 851–876 (APIVKFWFNTLAYLGFLMLYTFVVLV). Over 877-882 (QMEQLP) the chain is Extracellular. A helical transmembrane segment spans residues 883–904 (SVQEWIVIAYIFTYAIEKIREV). The Cytoplasmic portion of the chain corresponds to 905–923 (FMSEAGKISQKIKVWFSDY). The helical transmembrane segment at 924–943 (FNVSDTIAIISFFVGFGLRF) threads the bilayer. The Extracellular segment spans residues 944–956 (GAKWNYINAYDNH). The chain crosses the membrane as a helical span at residues 957–980 (VFVAGRLIYCLNIIFWYVRLLDFL). Residues 981-999 (AVNQQAGPYVMMIGKMVAN) lie on the Cytoplasmic side of the membrane. A helical transmembrane segment spans residues 1000–1023 (MFYIVVIMALVLLSFGVPRKAILY). Topologically, residues 1024–1025 (PH) are extracellular. Positions 1026-1066 (EEPSWSLAKDIVFHPYWMIFGEVYAYEIDVCANDSALPTIC) form an intramembrane region, pore-forming. At 1067–1069 (GPG) the chain is on the extracellular side. A helical transmembrane segment spans residues 1070 to 1098 (TWLTPFLQAVYLFVQYIIMVNLLIAFFNN). The Cytoplasmic portion of the chain corresponds to 1099 to 1862 (VYLQVKAISN…EATNSVRLML (764 aa)). Residues Cys-1143, Cys-1144, and Cys-1146 are each lipidated (S-palmitoyl cysteine). The residue at position 1163 (Thr-1163) is a Phosphothreonine. Residues Ser-1191, Ser-1193, Ser-1224, Ser-1255, and Ser-1258 each carry the phosphoserine modification. Residues 1198–1250 (RVTFERVEQMSIQIKEVGDRVNYIKRSLQSLDSQIGHLQDLSALTVDTLKTLT) adopt a coiled-coil conformation. Phosphothreonine is present on Thr-1265. Phosphoserine occurs at positions 1300, 1357, 1360, 1385, 1386, 1389, 1394, 1395, and 1403. The disordered stretch occupies residues 1380-1418 (NQKLGSSPNSSPHMSSPPTKFSVSTPSQPSCKSHLESTT). Low complexity predominate over residues 1385–1397 (SSPNSSPHMSSPP). The segment covering 1398 to 1410 (TKFSVSTPSQPSC) has biased composition (polar residues). Thr-1404 bears the Phosphothreonine mark. A phosphoserine mark is found at Ser-1406 and Ser-1445. A Phosphothreonine modification is found at Thr-1454. The residue at position 1455 (Ser-1455) is a Phosphoserine. Phosphothreonine is present on residues Thr-1466 and Thr-1470. Residues 1485 to 1511 (TPTSLHSEQESCSRRASTEDSPDVDSR) form a disordered region. Phosphoserine is present on residues Ser-1491, Ser-1497, Ser-1501, Ser-1510, and Ser-1530. Basic and acidic residues predominate over residues 1491-1502 (SEQESCSRRAST). At Thr-1534 the chain carries Phosphothreonine. Residue Ser-1540 is modified to Phosphoserine. Thr-1548 carries the post-translational modification Phosphothreonine. Residues Ser-1564 and Ser-1566 each carry the phosphoserine modification. Thr-1580 bears the Phosphothreonine mark. The Alpha-type protein kinase domain occupies 1591 to 1821 (ILNNSMSSWS…CCRKLKLPDL (231 aa)). Ser-1595 and Ser-1612 each carry phosphoserine. Positions 1618, 1619, 1620, 1621, and 1645 each coordinate ADP. Phosphoserine is present on Ser-1657. Thr-1682 bears the Phosphothreonine mark. The ADP site is built by Glu-1717, Glu-1718, and Met-1720. Zn(2+) is bound at residue His-1750. The active-site Proton acceptor is Asp-1764. Asp-1774 is a binding site for ADP. Ser-1776 is modified (phosphoserine). Residues His-1807, Cys-1809, and Cys-1813 each coordinate Zn(2+). Phosphothreonine is present on Thr-1827. Residues 1840–1862 (DLNLQAGNSTKESEATNSVRLML) are disordered. Phosphoserine occurs at positions 1848 and 1857.

This sequence in the C-terminal section; belongs to the protein kinase superfamily. Alpha-type protein kinase family. ALPK subfamily. In the N-terminal section; belongs to the transient receptor (TC 1.A.4) family. LTrpC subfamily. TRPM7 sub-subfamily. In terms of assembly, homodimer. Homotetramer. Forms heteromers with TRPM6; heteromeric channels are functionally different from the homomeric channels. Interacts with PLCB1. The cofactor is Zn(2+). In terms of processing, palmitoylated; palmitoylation at Cys-1143, Cys-1144 and Cys-1146 promotes TRPM7 trafficking from the Golgi to the surface membrane. Post-translationally, autophosphorylated; autophosphorylation regulates TRPM7 kinase activity towards its substrates. The C-terminal kinase domain can be cleaved from the channel segment in a cell-type-specific fashion. TRPM7 is cleaved by caspase-8, dissociating the kinase from the ion-conducting pore. The cleaved kinase fragments (M7CKs) can translocate to the cell nucleus and binds chromatin-remodeling complex proteins in a Zn(2+)-dependent manner to ultimately phosphorylate specific Ser/Thr residues of histones.

It is found in the cell membrane. The protein resides in the cytoplasmic vesicle membrane. It localises to the nucleus. It catalyses the reaction L-seryl-[protein] + ATP = O-phospho-L-seryl-[protein] + ADP + H(+). The enzyme catalyses L-threonyl-[protein] + ATP = O-phospho-L-threonyl-[protein] + ADP + H(+). The catalysed reaction is Mg(2+)(in) = Mg(2+)(out). It carries out the reaction Ca(2+)(in) = Ca(2+)(out). It catalyses the reaction Zn(2+)(in) = Zn(2+)(out). Its activity is regulated as follows. Channel displays constitutive activity. Channel activity is negatively regulated by cytosolic Mg(2+), Mg-ATP, low intracellular pH. Resting free cytosolic Mg(2+) and Mg-ATP concentrations seem to be sufficient to block native TRPM7 channel activity. TRPM7 channel activity is highly dependent on membrane levels of phosphatidylinositol 4,5 bisphosphate (PIP2). PIP2 hydrolysis negatively regulates TRPM7 channel activity. TRPM7 kinase activity does not affect channel activity. The kinase activity is controlled through the autophosphorylation of a serine/threonine-rich region located N-terminal to the catalytic domain. Functionally, bifunctional protein that combines an ion channel with an intrinsic kinase domain, enabling it to modulate cellular functions either by conducting ions through the pore or by phosphorylating downstream proteins via its kinase domain. The channel is highly permeable to divalent cations, specifically calcium (Ca2+), magnesium (Mg2+) and zinc (Zn2+) and mediates their influx. Controls a wide range of biological processes such as Ca2(+), Mg(2+) and Zn(2+) homeostasis, vesicular Zn(2+) release channel and intracellular Ca(2+) signaling, embryonic development, immune responses, cell motility, proliferation and differentiation. The C-terminal alpha-kinase domain autophosphorylates cytoplasmic residues of TRPM7. TRPM7 phosphorylates SMAD2, suggesting that TRPM7 kinase may play a role in activating SMAD signaling pathways. In vitro, TRPM7 kinase phosphorylates ANXA1 (annexin A1), myosin II isoforms and a variety of proteins with diverse cellular functions. Its function is as follows. The cleaved channel exhibits substantially higher current and potentiates Fas receptor signaling. In terms of biological role, the C-terminal kinase domain can be cleaved from the channel segment in a cell-type-specific fashion. In immune cells, the TRPM7 kinase domain is clipped from the channel domain by caspases in response to Fas-receptor stimulation. The cleaved kinase fragments can translocate to the nucleus, and bind chromatin-remodeling complex proteins in a Zn(2+)-dependent manner to ultimately phosphorylate specific Ser/Thr residues of histones known to be functionally important for cell differentiation and embryonic development. The chain is Transient receptor potential cation channel subfamily M member 7 from Rattus norvegicus (Rat).